The following is a 248-amino-acid chain: Protein maestro (248 aa).

The tract at residues 1 to 21 (MDQRQRRILGQPLSIPTSQPK) is disordered. An HEAT repeat occupies 128-163 (SFFIDITLQTRTLLDDENDSLRYSAFVLFGQLAAFA).

Ubiquitous.

It is found in the nucleus. It localises to the nucleolus. This Homo sapiens (Human) protein is Protein maestro (MRO).